The following is a 505-amino-acid chain: Deoxyguanosinetriphosphate triphosphohydrolase (505 aa).

An HD domain is found at 66 to 273; it reads RLTHSLEVQQ…MEAADDISYC (208 aa).

Belongs to the dGTPase family. Type 1 subfamily. As to quaternary structure, homotetramer. The cofactor is Mg(2+).

It carries out the reaction dGTP + H2O = 2'-deoxyguanosine + triphosphate + H(+). DGTPase preferentially hydrolyzes dGTP over the other canonical NTPs. In Escherichia fergusonii (strain ATCC 35469 / DSM 13698 / CCUG 18766 / IAM 14443 / JCM 21226 / LMG 7866 / NBRC 102419 / NCTC 12128 / CDC 0568-73), this protein is Deoxyguanosinetriphosphate triphosphohydrolase.